Reading from the N-terminus, the 214-residue chain is Ribosomal RNA small subunit methyltransferase G (214 aa).

S-adenosyl-L-methionine-binding positions include G72, F77, 125 to 126 (VE), and R141.

It belongs to the methyltransferase superfamily. RNA methyltransferase RsmG family.

It localises to the cytoplasm. The enzyme catalyses guanosine(527) in 16S rRNA + S-adenosyl-L-methionine = N(7)-methylguanosine(527) in 16S rRNA + S-adenosyl-L-homocysteine. In terms of biological role, specifically methylates the N7 position of guanine in position 527 of 16S rRNA. The protein is Ribosomal RNA small subunit methyltransferase G of Sinorhizobium fredii (strain NBRC 101917 / NGR234).